The following is a 161-amino-acid chain: V-type proton ATPase 16 kDa proteolipid subunit c 2 (161 aa).

The Lumenal portion of the chain corresponds to 1 to 15 (MSYDLETAERAAYAP). Residues 16 to 36 (FFGYMGAASAQIFTVLGAAYG) traverse the membrane as a helical segment. Topologically, residues 37–58 (TAKSAVGICSMGVMRPELIMKS) are cytoplasmic. The chain crosses the membrane as a helical span at residues 59-79 (VIPVIMAGIIGIYGLVVAMVL). At 80–98 (KGKVTSASAGYDLNKGFAH) the chain is on the lumenal side. A helical membrane pass occupies residues 99–119 (LAAGLTCGLCGLGAGYAIGIV). The Cytoplasmic portion of the chain corresponds to 120 to 137 (GDAGVRGTAQQPRLFVGM). The chain crosses the membrane as a helical span at residues 138-158 (ILILIFSEVLGLYGMIVALIL). The Lumenal segment spans residues 159-161 (GTS).

It belongs to the V-ATPase proteolipid subunit family. As to quaternary structure, V-ATPase is a heteromultimeric enzyme made up of two complexes: the ATP-hydrolytic V1 complex and the proton translocation V0 complex. The V1 complex consists of three catalytic AB heterodimers that form a heterohexamer, three peripheral stalks each consisting of EG heterodimers, one central rotor including subunits D and F, and the regulatory subunits C and H. The proton translocation complex V0 consists of the proton transport subunit a, a ring of proteolipid subunits c9c'', rotary subunit d, subunits e and f, and the accessory subunits vah-19/Ac45 and vah-20/PRR. In terms of tissue distribution, expressed in the H-shaped excretory cell, rectum, and a pair of cells posterior to the anus.

Its subcellular location is the membrane. Proton-conducting pore forming subunit of the V0 complex of vacuolar(H+)-ATPase (V-ATPase), a multisubunit enzyme composed of a peripheral complex (V1) that hydrolyzes ATP and a membrane integral complex (V0) that translocates protons. V-ATPase is responsible for acidifying and maintaining the pH of intracellular compartments and in some cell types, is targeted to the plasma membrane, where it is responsible for acidifying the extracellular environment. Involved in necrotic cell death. Required along with other vacuolar ATPase components for the removal of protein aggregates which form in immature oocytes in the distal gonad. This removal occurs as the oocytes mature and move to the proximal gonad, is triggered by the introduction of sperm through mating and occurs before fertilization. The introduction of sperm triggers V-ATPase accumulation in proximal oocytes and induces lysosomal acidification which leads to engulfing of protein aggregates by lysosomes and subsequent clearance of the aggregates. Lysosomal acidification also leads to changes in mitochondrial morphology and function. Mitochondria in distal immature oocytes are fragmented, produce high levels of reactive oxygen species (ROS) and have high membrane potential, indicative of metabolic inactivity. In contrast, mitochondria in proximal mature oocytes are tubular with lower ROS levels and membrane potential, indicative of an active metabolic state required for aggregate mobilization before clearance. The polypeptide is V-type proton ATPase 16 kDa proteolipid subunit c 2 (Caenorhabditis elegans).